We begin with the raw amino-acid sequence, 823 residues long: MAEPSAPESKHKSSLNSSPWSGLMALGNSRHGHHGPGTQSASSAAAPKPGPPAGLSGGLSQPAGWQSLLSFTILFLAWLAGFSSRLFAVIRFESIIHEFDPWFNYRSTHHLASHGFYEFLNWFDERAWYPLGRIVGGTVYPGLMITAGLIHWILNTLNITVHIRDVCVFLAPTFSGLTSISTFLLTRELWNQGAGLLAACFIAIVPGYISRSVAGSFDNEGIAIFALQFTYYLWVKSVKTGSVFWTMCCCLSYFYMVSAWGGYVFIINLIPLHVFVLLLMQRYSKRVYIAYSTFYIVGLILSMQIPFVGFQPIRTSEHMAAAGVFALLQAYAFLQYLRDRLTKQEFQTLFFLGVSLAAGAVFLSVIYLTYTGYIAPWSGRFYSLWDTGYAKIHIPIIASVSEHQPTTWVSFFFDLHILVCTFPAGLWFCIKNINDERVFVALYAISAVYFAGVMVRLMLTLTPVVCMLSAIAFSNVFEHYLGDDMKRENPPVEDSSDEDDKRNPGNLYDKAGKVRKHVTEQEKPEEGLGPNIKSIVTMLMLMLLMMFAVHCTWVTSNAYSSPSVVLASYNHDGTRNILDDFREAYFWLRQNTDEHARVMSWWDYGYQIAGMANRTTLVDNNTWNNSHIALVGKAMSSNETAAYKIMRSLDVDYVLVIFGGVIGYSGDDINKFLWMVRIAEGEHPKDIREGDYFTQQGEFRVDKAGSPTLLNCLMYKMSYYRFGEMQLDFRTPPGFDRTRNAEIGNKDIKFKHLEEAFTSEHWLVRIYKVKAPDNRETLGHKPRVTNIVPKQKYLSKKTTKRKRGYVKNKLVFKKGKKTSKKTV.

Positions 1–58 are disordered; it reads MAEPSAPESKHKSSLNSSPWSGLMALGNSRHGHHGPGTQSASSAAAPKPGPPAGLSGG. Alanine 2 carries the post-translational modification N-acetylalanine. Residues 2-41 lie on the Cytoplasmic side of the membrane; sequence AEPSAPESKHKSSLNSSPWSGLMALGNSRHGHHGPGTQSA. Serine 13, serine 18, and serine 29 each carry phosphoserine. Residues 42 to 83 traverse the membrane as a helical segment; that stretch reads SSAAAPKPGPPAGLSGGLSQPAGWQSLLSFTILFLAWLAGFS. At 84-170 the chain is on the lumenal side; the sequence is SRLFAVIRFE…VHIRDVCVFL (87 aa). Positions 98–100 match the DXD motif 1 motif; sequence EFD. Aspartate 100 contacts Mn(2+). A helical transmembrane segment spans residues 171–189; sequence APTFSGLTSISTFLLTREL. Topologically, residues 190-191 are cytoplasmic; sequence WN. The helical transmembrane segment at 192–209 threads the bilayer; it reads QGAGLLAACFIAIVPGYI. At 210–220 the chain is on the lumenal side; the sequence is SRSVAGSFDNE. The Mn(2+) site is built by aspartate 218 and glutamate 220. Residues 218–220 carry the DXD motif 2 motif; that stretch reads DNE. A helical membrane pass occupies residues 221-240; sequence GIAIFALQFTYYLWVKSVKT. Residues 241-242 are Cytoplasmic-facing; sequence GS. A helical transmembrane segment spans residues 243-257; it reads VFWTMCCCLSYFYMV. Residues 258–262 are Lumenal-facing; it reads SAWGG. Residues 263–279 traverse the membrane as a helical segment; that stretch reads YVFIINLIPLHVFVLLL. The Cytoplasmic segment spans residues 280 to 284; the sequence is MQRYS. Residues 285–310 form a helical membrane-spanning segment; sequence KRVYIAYSTFYIVGLILSMQIPFVGF. At 311–318 the chain is on the lumenal side; sequence QPIRTSEH. Residues 319 to 338 traverse the membrane as a helical segment; it reads MAAAGVFALLQAYAFLQYLR. At 339 to 347 the chain is on the cytoplasmic side; that stretch reads DRLTKQEFQ. Residues 348-368 traverse the membrane as a helical segment; sequence TLFFLGVSLAAGAVFLSVIYL. Over 369 to 407 the chain is Lumenal; sequence TYTGYIAPWSGRFYSLWDTGYAKIHIPIIASVSEHQPTT. Positions 399-402 match the SVSE motif motif; sequence SVSE. A helical membrane pass occupies residues 408-430; that stretch reads WVSFFFDLHILVCTFPAGLWFCI. Topologically, residues 431 to 436 are cytoplasmic; it reads KNINDE. Residues 437-453 traverse the membrane as a helical segment; it reads RVFVALYAISAVYFAGV. At 454-457 the chain is on the lumenal side; that stretch reads MVRL. Arginine 456 provides a ligand contact to dolichyl diphosphooligosaccharide. The chain crosses the membrane as a helical span at residues 458–479; that stretch reads MLTLTPVVCMLSAIAFSNVFEH. Residues 480 to 523 are Cytoplasmic-facing; the sequence is YLGDDMKRENPPVEDSSDEDDKRNPGNLYDKAGKVRKHVTEQEK. Residues 487-526 are disordered; the sequence is RENPPVEDSSDEDDKRNPGNLYDKAGKVRKHVTEQEKPEE. Phosphoserine is present on residues serine 495 and serine 496. Basic and acidic residues predominate over residues 517–526; the sequence is HVTEQEKPEE. Residues 524 to 549 traverse the membrane as a helical segment; the sequence is PEEGLGPNIKSIVTMLMLMLLMMFAV. Over 550-823 the chain is Lumenal; sequence HCTWVTSNAY…KGKKTSKKTV (274 aa). Positions 601-603 are interacts with target acceptor peptide in protein substrate; that stretch reads WWD. Residues 601–605 carry the WWDYG motif motif; the sequence is WWDYG. Dolichyl diphosphooligosaccharide is bound at residue tyrosine 606. 2 N-linked (GlcNAc...) asparagine glycosylation sites follow: asparagine 613 and asparagine 620. N-linked (GlcNAc...) (high mannose) asparagine glycosylation occurs at asparagine 624. Residue asparagine 638 is glycosylated (N-linked (GlcNAc...) asparagine). A DK motif motif is present at residues 668–675; it reads DINKFLWM.

It belongs to the STT3 family. In terms of assembly, component of the oligosaccharyltransferase (OST) complex. There are 2 OST complexes, OST-A and OST-B, which contain STT3A or STT3B as catalytic subunit, respectively. OST-A and OST-B contain common core subunits RPN1, RPN2, OST48, OST4, DAD1 and TMEM258, and OST-B contains either MAGT1 or TUSC3 as specific accessory subunit. The cofactor is Mg(2+). It depends on Mn(2+) as a cofactor.

It is found in the endoplasmic reticulum membrane. It carries out the reaction a di-trans,poly-cis-dolichyl diphosphooligosaccharide + L-asparaginyl-[protein] = N(4)-(oligosaccharide-(1-&gt;4)-N-acetyl-beta-D-glucosaminyl-(1-&gt;4)-N-acetyl-beta-D-glucosaminyl)-L-asparaginyl-[protein] + a di-trans,poly-cis-dolichyl diphosphate + H(+). The protein operates within protein modification; protein glycosylation. Catalytic subunit of the oligosaccharyl transferase (OST) complex that catalyzes the initial transfer of a defined glycan (Glc(3)Man(9)GlcNAc(2) in eukaryotes) from the lipid carrier dolichol-pyrophosphate to an asparagine residue within an Asn-X-Ser/Thr consensus motif in nascent polypeptide chains, the first step in protein N-glycosylation. N-glycosylation occurs cotranslationally and the complex associates with the Sec61 complex at the channel-forming translocon complex that mediates protein translocation across the endoplasmic reticulum (ER). All subunits are required for a maximal enzyme activity. This subunit contains the active site and the acceptor peptide and donor lipid-linked oligosaccharide (LLO) binding pockets. STT3B is present in a small subset of OST complexes and mediates both cotranslational and post-translational N-glycosylation of target proteins: STT3B-containing complexes are required for efficient post-translational glycosylation and while they are less competent than STT3A-containing complexes for cotranslational glycosylation, they have the ability to mediate glycosylation of some nascent sites that are not accessible for STT3A. STT3B-containing complexes also act post-translationally and mediate modification of skipped glycosylation sites in unfolded proteins. Plays a role in ER-associated degradation (ERAD) pathway that mediates ubiquitin-dependent degradation of misfolded endoplasmic reticulum proteins by mediating N-glycosylation of unfolded proteins, which are then recognized by the ERAD pathway and targeted for degradation. In Mus musculus (Mouse), this protein is Dolichyl-diphosphooligosaccharide--protein glycosyltransferase subunit STT3B.